A 369-amino-acid polypeptide reads, in one-letter code: Queuine tRNA-ribosyltransferase (369 aa).

Asp-89 serves as the catalytic Proton acceptor. Substrate contacts are provided by residues 89–93, Asp-142, Gln-184, and Gly-211; that span reads DSGGF. An RNA binding region spans residues 242–248; sequence GGGSPEL. Asp-261 serves as the catalytic Nucleophile. Residues 266–270 are RNA binding; important for wobble base 34 recognition; the sequence is TRIAR. Cys-299, Cys-301, Cys-304, and His-330 together coordinate Zn(2+).

Belongs to the queuine tRNA-ribosyltransferase family. In terms of assembly, homodimer. Within each dimer, one monomer is responsible for RNA recognition and catalysis, while the other monomer binds to the replacement base PreQ1. Zn(2+) serves as cofactor.

The enzyme catalyses 7-aminomethyl-7-carbaguanine + guanosine(34) in tRNA = 7-aminomethyl-7-carbaguanosine(34) in tRNA + guanine. Its pathway is tRNA modification; tRNA-queuosine biosynthesis. In terms of biological role, catalyzes the base-exchange of a guanine (G) residue with the queuine precursor 7-aminomethyl-7-deazaguanine (PreQ1) at position 34 (anticodon wobble position) in tRNAs with GU(N) anticodons (tRNA-Asp, -Asn, -His and -Tyr). Catalysis occurs through a double-displacement mechanism. The nucleophile active site attacks the C1' of nucleotide 34 to detach the guanine base from the RNA, forming a covalent enzyme-RNA intermediate. The proton acceptor active site deprotonates the incoming PreQ1, allowing a nucleophilic attack on the C1' of the ribose to form the product. After dissociation, two additional enzymatic reactions on the tRNA convert PreQ1 to queuine (Q), resulting in the hypermodified nucleoside queuosine (7-(((4,5-cis-dihydroxy-2-cyclopenten-1-yl)amino)methyl)-7-deazaguanosine). This is Queuine tRNA-ribosyltransferase from Thermotoga maritima (strain ATCC 43589 / DSM 3109 / JCM 10099 / NBRC 100826 / MSB8).